The primary structure comprises 624 residues: (-)-beta-phellandrene synthase 1, chloroplastic (624 aa).

The N-terminal 48 residues, M1–S48, are a transit peptide targeting the chloroplast. Mg(2+)-binding residues include D375, D379, and D527. A DDXXD motif motif is present at residues D375–D379.

This sequence belongs to the terpene synthase family. Tpsd subfamily. Requires Mg(2+) as cofactor. Mn(2+) is required as a cofactor.

The protein localises to the plastid. It localises to the chloroplast. It catalyses the reaction (2E)-geranyl diphosphate = (-)-beta-phellandrene + diphosphate. It functions in the pathway terpene metabolism; oleoresin biosynthesis. Its function is as follows. Terpene synthase (TPS) involved in the biosynthesis of monoterpene natural products included in conifer oleoresin secretions and volatile emissions; these compounds contribute to biotic and abiotic stress defense against herbivores and pathogens. Catalyzes the conversion of (2E)-geranyl diphosphate (GPP) to (-)-beta-phellandrene. In Picea sitchensis (Sitka spruce), this protein is (-)-beta-phellandrene synthase 1, chloroplastic.